The following is a 402-amino-acid chain: Arabinosyltransferase RRA1 (402 aa).

The Cytoplasmic portion of the chain corresponds to 1–13; it reads MAVRKEKVQPFRE. A helical; Signal-anchor for type II membrane protein membrane pass occupies residues 14-34; that stretch reads CGIAIAVLVGIFIGCVCTILI. At 35–402 the chain is on the lumenal side; that stretch reads PNDFVNFRSS…DALDRFRDGS (368 aa). Positions 225–227 match the DXD motif motif; it reads DVD. N-linked (GlcNAc...) asparagine glycosylation occurs at N253.

The protein belongs to the glycosyltransferase 77 family. Expressed in leaf meristem and at points of cauline leaf attachments on the primary stem. Expressed at low levels in siliques.

The protein resides in the golgi apparatus membrane. In terms of biological role, plays a role in the arabinosylation of cell wall components. Involved in the arabinosylation of extensin proteins in root hair cells. Extensins are structural glycoproteins present in cell walls and its arabinosylation is important for root hair cell development. This Arabidopsis thaliana (Mouse-ear cress) protein is Arabinosyltransferase RRA1.